A 168-amino-acid polypeptide reads, in one-letter code: Peptide deformylase 1 (168 aa).

Fe cation contacts are provided by Cys92 and His134. Residue Glu135 is part of the active site. His138 lines the Fe cation pocket.

The protein belongs to the polypeptide deformylase family. Requires Fe(2+) as cofactor.

It catalyses the reaction N-terminal N-formyl-L-methionyl-[peptide] + H2O = N-terminal L-methionyl-[peptide] + formate. Its function is as follows. Removes the formyl group from the N-terminal Met of newly synthesized proteins. Requires at least a dipeptide for an efficient rate of reaction. N-terminal L-methionine is a prerequisite for activity but the enzyme has broad specificity at other positions. This is Peptide deformylase 1 from Pseudomonas syringae pv. tomato (strain ATCC BAA-871 / DC3000).